Reading from the N-terminus, the 1019-residue chain is Probable LRR receptor-like serine/threonine-protein kinase At1g29720 (1019 aa).

Residues 1–19 form the signal peptide; it reads MSIILWSFFLFFTIILSSL. Residues 20–615 lie on the Extracellular side of the membrane; it reads TNITTLASFS…EKTKHHIKYP (596 aa). Residues Asn21, Asn79, and Asn90 are each glycosylated (N-linked (GlcNAc...) asparagine). LRR repeat units lie at residues 93–117, 118–141, 143–165, 166–189, 190–212, 214–236, 237–261, 263–283, 284–307, 308–330, 332–351, 352–374, and 375–398; these read ICRI…LTKL, PYLK…WAKM, YLTS…LQNF, KNLT…LGNL, TSLT…TLAR, VNLE…YIGN, WTRL…VVRL, NLLE…NLSS, KGLK…IWNL, TDLK…VQNP, KNIY…GGLL, NSQS…QKGS, and TINT…AVPA. Asn153, Asn167, and Asn188 each carry an N-linked (GlcNAc...) asparagine glycan. N-linked (GlcNAc...) asparagine glycans are attached at residues Asn225 and Asn236. Residues Asn280 and Asn306 are each glycosylated (N-linked (GlcNAc...) asparagine). N-linked (GlcNAc...) asparagine glycosylation is found at Asn363, Asn387, Asn469, and Asn558. The chain crosses the membrane as a helical span at residues 616–636; that stretch reads LILGASGALVTIVLLAVGIYA. The Cytoplasmic portion of the chain corresponds to 637–1019; it reads RGIYRRDNNR…STVENSSSSL (383 aa). The Protein kinase domain occupies 673–946; that stretch reads FDQANKLGEG…EAVKMLEGEI (274 aa). Residues 679 to 687 and Lys701 each bind ATP; that span reads LGEGGFGSV. At Tyr746 the chain carries Phosphotyrosine. Catalysis depends on Asp797, which acts as the Proton acceptor. Phosphoserine is present on Ser830. Phosphothreonine is present on residues Thr831 and Thr836. At Tyr844 the chain carries Phosphotyrosine.

The protein belongs to the protein kinase superfamily. Ser/Thr protein kinase family.

It is found in the cell membrane. The enzyme catalyses L-seryl-[protein] + ATP = O-phospho-L-seryl-[protein] + ADP + H(+). It catalyses the reaction L-threonyl-[protein] + ATP = O-phospho-L-threonyl-[protein] + ADP + H(+). This is Probable LRR receptor-like serine/threonine-protein kinase At1g29720 (RFK1) from Arabidopsis thaliana (Mouse-ear cress).